Consider the following 87-residue polypeptide: U15-lycotoxin-Ls1h (87 aa).

The first 20 residues, 1–20 (MNSKIFAVLLLLGLLSCVLS), serve as a signal peptide directing secretion. The WAP domain occupies 21–66 (DQYCPKSSITACKKMNTRNDCCKDDDCTGGSWCCATPCGNFCKYPT). Disulfide bonds link cysteine 24–cysteine 54, cysteine 32–cysteine 58, cysteine 41–cysteine 53, cysteine 42–cysteine 80, and cysteine 47–cysteine 62.

It belongs to the venom protein 11 family. 01 (wap-1) subfamily. In terms of processing, contains 5 disulfide bonds. Expressed by the venom gland.

It localises to the secreted. Has antibacterial activity. The polypeptide is U15-lycotoxin-Ls1h (Lycosa singoriensis (Wolf spider)).